Consider the following 377-residue polypeptide: Nitric oxide reductase FlRd-NAD(+) reductase (377 aa).

It belongs to the FAD-dependent oxidoreductase family. Requires FAD as cofactor.

It localises to the cytoplasm. The catalysed reaction is 2 reduced [nitric oxide reductase rubredoxin domain] + NAD(+) + H(+) = 2 oxidized [nitric oxide reductase rubredoxin domain] + NADH. It participates in nitrogen metabolism; nitric oxide reduction. One of at least two accessory proteins for anaerobic nitric oxide (NO) reductase. Reduces the rubredoxin moiety of NO reductase. In Escherichia coli O139:H28 (strain E24377A / ETEC), this protein is Nitric oxide reductase FlRd-NAD(+) reductase.